A 142-amino-acid polypeptide reads, in one-letter code: Hemoglobin subunit alpha-2 (142 aa).

Residues Leu-2–Arg-142 enclose the Globin domain. Position 59 (His-59) interacts with O2. A heme b-binding site is contributed by His-88.

It belongs to the globin family. As to quaternary structure, heterotetramer of two alpha chains and two beta chains. Red blood cells.

Its function is as follows. Involved in oxygen transport from the lung to the various peripheral tissues. This Xenopus borealis (Kenyan clawed frog) protein is Hemoglobin subunit alpha-2 (hba2).